A 514-amino-acid polypeptide reads, in one-letter code: Maturase K (514 aa).

This sequence belongs to the intron maturase 2 family. MatK subfamily.

Its subcellular location is the plastid. It localises to the chloroplast. Functionally, usually encoded in the trnK tRNA gene intron. Probably assists in splicing its own and other chloroplast group II introns. The chain is Maturase K from Encephalartos altensteinii (Altenstein's bread tree).